A 330-amino-acid polypeptide reads, in one-letter code: Complement factor H-related protein 3 (330 aa).

Residues 1–18 (MLLLINVILTLWVSCANG) form the signal peptide. Sushi domains follow at residues 22–84 (PCDF…VPCL), 85–142 (RKCY…RCIR), 144–205 (RTCS…ICIN), 208–266 (EKCG…RCIH), and 267–330 (PCII…PRCE). Cystine bridges form between cysteine 23–cysteine 72, cysteine 55–cysteine 83, cysteine 87–cysteine 129, cysteine 114–cysteine 140, cysteine 146–cysteine 192, and cysteine 175–cysteine 203. Asparagine 108 carries N-linked (GlcNAc...) asparagine glycosylation. 2 N-linked (GlcNAc...) asparagine glycosylation sites follow: asparagine 185 and asparagine 205. 4 cysteine pairs are disulfide-bonded: cysteine 210/cysteine 253, cysteine 239/cysteine 264, cysteine 268/cysteine 319, and cysteine 302/cysteine 329. N-linked (GlcNAc...) asparagine glycosylation is present at asparagine 309.

Expressed by the liver and secreted in plasma.

It localises to the secreted. Might be involved in complement regulation. The sequence is that of Complement factor H-related protein 3 (CFHR3) from Homo sapiens (Human).